Here is a 417-residue protein sequence, read N- to C-terminus: Peptidyl-Asp metalloendopeptidase (417 aa).

An N-terminal signal peptide occupies residues 1–25; that stretch reads MLSRSIGKAAGGLVLGLSVAAAAHA. His327 contacts Zn(2+). Glu328 is an active-site residue. Zn(2+) contacts are provided by His331 and His337.

It belongs to the peptidase M72 family. It depends on Zn(2+) as a cofactor.

It carries out the reaction Cleavage of Xaa-|-Asp, Xaa-|-Glu and Xaa-|-cysteic acid bonds.. In terms of biological role, metalloprotease, specifically cleaves on the N-terminal side of aspartyl, glutamyl and cysteic acid residues. This is Peptidyl-Asp metalloendopeptidase from Stenotrophomonas maltophilia (strain R551-3).